Consider the following 261-residue polypeptide: MAESHLQSSLITASQFFEIWLHFDADGSGYLEGKELQNLIQELLQARKKAGLELSPEMKSFVDQYGQRDDGKIGIVELAHVLPTEENFLLLFRCQQLKSCEEFMKTWRKYDTDHSGFIETEELKNFLKDLLEKANKTVDDTKLAEYTDLMLKLFDSNNDGKLELTEMARLLPVQENFLLKFQGIKMCGKEFNKAFELYDQDGNGYIDENELDALLKDLCEKNKQELDINNITTYKKNIMALSDGGKLYRTDLALILSAGDN.

Ala2 carries the N-acetylalanine modification. The tract at residues 2-7 (AESHLQ) is interaction with RANBP9. EF-hand domains follow at residues 11-46 (ITAS…LLQA), 53-88 (ELSP…EENF), 98-133 (KSCE…LLEK), 142-177 (KLAE…QENF), and 186-221 (MCGK…LCEK). Residues Asp24, Asp26, Ser28, Tyr30, and Glu35 each contribute to the Ca(2+) site. Ca(2+) is bound by residues Asp111, Asp113, Ser115, Glu122, Asp155, Asn157, Asp159, Lys161, Glu166, Asp199, Asp201, Asn203, Tyr205, and Glu210.

It belongs to the calbindin family. As to quaternary structure, interacts with RANBP9. Expressed in the modiolar nerve root and in bushy neurons in the ventral cochlear nucleus (at protein level).

Functionally, buffers cytosolic calcium. May stimulate a membrane Ca(2+)-ATPase and a 3',5'-cyclic nucleotide phosphodiesterase. This is Calbindin (Calb1) from Mus musculus (Mouse).